We begin with the raw amino-acid sequence, 76 residues long: MARFFRRRKFCRFTAEGVKEIDFKDLNTLKAYISETGKIVPSRITGTKARYQRQLATAIKRARYLALLPYTDSHGR.

It belongs to the bacterial ribosomal protein bS18 family. Part of the 30S ribosomal subunit. Forms a tight heterodimer with protein bS6.

Binds as a heterodimer with protein bS6 to the central domain of the 16S rRNA, where it helps stabilize the platform of the 30S subunit. The sequence is that of Small ribosomal subunit protein bS18 from Azotobacter vinelandii (strain DJ / ATCC BAA-1303).